The chain runs to 878 residues: Bifunctional heparan sulfate N-deacetylase/N-sulfotransferase 1 (878 aa).

Residues 1 to 17 (MSLSLKTRRFGRPVRPQ) lie on the Cytoplasmic side of the membrane. A sufficient for localization to Golgi membrane region spans residues 1–169 (MSLSLKTRRF…VEYGVGIIGF (169 aa)). Residues 18–38 (LVLLLLFALCLLSVFISAYYL) form a helical; Signal-anchor for type II membrane protein membrane-spanning segment. Over 39-878 (YGWKRGLEPS…WLREELQNTR (840 aa)) the chain is Lumenal. The tract at residues 40 to 594 (GWKRGLEPSG…KRHKDIWSKE (555 aa)) is heparan sulfate N-deacetylase 1. N-linked (GlcNAc...) asparagine glycosylation is found at N231, N347, and N397. The heparan sulfate N-sulfotransferase 1 stretch occupies residues 595 to 878 (KTCDRFPKLL…WLREELQNTR (284 aa)). K610 serves as the catalytic For sulfotransferase activity. An adenosine 3',5'-bisphosphate-binding site is contributed by 610–614 (KTGTT). N663 carries an N-linked (GlcNAc...) asparagine glycan. Positions 708 and 813 each coordinate adenosine 3',5'-bisphosphate. Cysteines 814 and 824 form a disulfide. 829–833 (KGRKY) is an adenosine 3',5'-bisphosphate binding site.

It belongs to the sulfotransferase 1 family. NDST subfamily. In terms of assembly, monomer.

The protein resides in the golgi apparatus membrane. The protein localises to the golgi apparatus. It localises to the trans-Golgi network membrane. It catalyses the reaction alpha-D-glucosaminyl-[heparan sulfate](n) + 3'-phosphoadenylyl sulfate = N-sulfo-alpha-D-glucosaminyl-[heparan sulfate](n) + adenosine 3',5'-bisphosphate + 2 H(+). It functions in the pathway glycan metabolism; heparan sulfate biosynthesis. It participates in glycan metabolism; heparin biosynthesis. In terms of biological role, essential bifunctional enzyme that catalyzes both the N-deacetylation and the N-sulfation of glucosamine (GlcNAc) of the glycosaminoglycan in heparan sulfate. Modifies the GlcNAc-GlcA disaccharide repeating sugar backbone to make N-sulfated heparosan, a prerequisite substrate for later modifications in heparin biosynthesis. Plays a role in determining the extent and pattern of sulfation of heparan sulfate. In Xenopus laevis (African clawed frog), this protein is Bifunctional heparan sulfate N-deacetylase/N-sulfotransferase 1 (ndst1).